Here is a 377-residue protein sequence, read N- to C-terminus: Presenilin-associated rhomboid-like protein, mitochondrial (377 aa).

The transit peptide at 1 to 52 (MAWRGWAQRGWGCGQAWTLPVCGGSYEELTAALAPSRLLRRRFNFFIQQKCG) directs the protein to the mitochondrion. Topologically, residues 53–99 (FRKAPRKVEPRRSDTSSEAYKRSALIPPVEETAFYPSPYPIRTLVKP) are mitochondrial matrix. A phosphoserine mark is found at Ser-65 and Ser-68. A helical transmembrane segment spans residues 100-119 (LFFTVGFTGCAFGSAAIWQY). Over 120-165 (ESLKSKVQSYFDGIKADWLDSIRPQKEGDFRKEINKWWNNLSDGQR) the chain is Mitochondrial intermembrane. The chain crosses the membrane as a helical span at residues 166-185 (TVTGIIAANVFVFCLWRVPS). Over 186–205 (LQRTMIRYFTSNPASKVLCS) the chain is Mitochondrial matrix. The helical transmembrane segment at 206–228 (PMLLSTFSHFSLFHMAANMYVLW) threads the bilayer. The Mitochondrial intermembrane segment spans residues 229 to 242 (SFSSSIVNILGQEQ). The helical transmembrane segment at 243 to 260 (FMAVYLSAGVISTFVSYV) threads the bilayer. The Mitochondrial matrix portion of the chain corresponds to 261–270 (CKVATGRYGP). Residues 271–287 (SLGASGAIMTVLAAVCT) traverse the membrane as a helical segment. Ser-275 acts as the Nucleophile in catalysis. The Mitochondrial intermembrane portion of the chain corresponds to 288–293 (KIPEGR). The chain crosses the membrane as a helical span at residues 294-316 (LAIIFLPMFTFTAGNALKAIIAM). Residues 317–330 (DTAGMILGWKFFDH) are Mitochondrial matrix-facing. A helical transmembrane segment spans residues 331 to 352 (AAHLGGALFGIWYITYGHELIW). His-333 is a catalytic residue. Topologically, residues 353 to 377 (KNREPLVKIWHEMRTNSPKKGGGSK) are mitochondrial intermembrane.

This sequence belongs to the peptidase S54 family. As to quaternary structure, interacts with PSEN1 and PSEN2. Binds OPA1. In terms of processing, P-beta is proteolytically processed (beta-cleavage) in a PARL-dependent manner.

The protein resides in the mitochondrion inner membrane. Its subcellular location is the nucleus. It catalyses the reaction Cleaves type-1 transmembrane domains using a catalytic dyad composed of serine and histidine that are contributed by different transmembrane domains.. In terms of biological role, required for the control of apoptosis during postnatal growth. Essential for proteolytic processing of an antiapoptotic form of OPA1 which prevents the release of mitochondrial cytochrome c in response to intrinsic apoptotic signals. Required for the maturation of PINK1 into its 52kDa mature form after its cleavage by mitochondrial-processing peptidase (MPP). Promotes cleavage of serine/threonine-protein phosphatase PGAM5 in damaged mitochondria in response to loss of mitochondrial membrane potential. Mediates differential cleavage of PINK1 and PGAM5 depending on the health status of mitochondria, disassociating from PINK1 and associating with PGAM5 in response to mitochondrial membrane potential loss. Required for processing of CLPB into a form with higher protein disaggregase activity by removing an autoinhibitory N-terminal peptide. Promotes processing of DIABLO/SMAC in the mitochondrion which is required for DIABLO apoptotic activity. Also required for cleavage of STARD7 and TTC19. Promotes changes in mitochondria morphology regulated by phosphorylation of P-beta domain. The polypeptide is Presenilin-associated rhomboid-like protein, mitochondrial (PARL) (Bos taurus (Bovine)).